A 190-amino-acid chain; its full sequence is Threonylcarbamoyl-AMP synthase (190 aa).

The region spanning 9 to 190 (FLQLALARQT…IDIVTGQQFR (182 aa)) is the YrdC-like domain.

This sequence belongs to the SUA5 family. TsaC subfamily.

It localises to the cytoplasm. It carries out the reaction L-threonine + hydrogencarbonate + ATP = L-threonylcarbamoyladenylate + diphosphate + H2O. Required for the formation of a threonylcarbamoyl group on adenosine at position 37 (t(6)A37) in tRNAs that read codons beginning with adenine. Catalyzes the conversion of L-threonine, HCO(3)(-)/CO(2) and ATP to give threonylcarbamoyl-AMP (TC-AMP) as the acyladenylate intermediate, with the release of diphosphate. This is Threonylcarbamoyl-AMP synthase from Marinobacter nauticus (strain ATCC 700491 / DSM 11845 / VT8) (Marinobacter aquaeolei).